The chain runs to 765 residues: Polyadenylate-binding protein, cytoplasmic and nuclear (765 aa).

Over residues methionine 1 to serine 37 the composition is skewed to low complexity. The tract at residues methionine 1–alanine 49 is disordered. Residues threonine 38–serine 48 are compositionally biased toward polar residues. 4 consecutive RRM domains span residues alanine 49–arginine 127, glycine 137–serine 214, threonine 230–lysine 307, and valine 333–arginine 470. 2 disordered regions span residues valine 364–lysine 427 and proline 619–alanine 657. Over residues glutamate 377–lysine 427 the composition is skewed to basic and acidic residues. Low complexity predominate over residues valine 628–proline 637. One can recognise a PABC domain in the interval alanine 659–lysine 736. The tract at residues asparagine 737–serine 765 is disordered. Basic and acidic residues predominate over residues alanine 749–serine 765.

It belongs to the polyadenylate-binding protein type-1 family.

Its subcellular location is the cytoplasm. It localises to the nucleus. In terms of biological role, binds the poly(A) tail of mRNA. Appears to be an important mediator of the multiple roles of the poly(A) tail in mRNA biogenesis, stability and translation. In the nucleus, involved in both mRNA cleavage and polyadenylation. Is also required for efficient mRNA export to the cytoplasm. Acts in concert with a poly(A)-specific nuclease (PAN) to affect poly(A) tail shortening, which may occur concomitantly with either nucleocytoplasmic mRNA transport or translational initiation. In the cytoplasm, stimulates translation initiation and regulates mRNA decay through translation termination-coupled poly(A) shortening, probably mediated by PAN. The sequence is that of Polyadenylate-binding protein, cytoplasmic and nuclear (pab1) from Aspergillus oryzae (strain ATCC 42149 / RIB 40) (Yellow koji mold).